A 225-amino-acid chain; its full sequence is pH-response regulator palI/RIM9 homolog 2 (225 aa).

Residues 1-4 lie on the Cytoplasmic side of the membrane; the sequence is MLVK. The helical transmembrane segment at 5–25 threads the bilayer; it reads IVLVVLLTLALVFECFSTISV. The Extracellular segment spans residues 26 to 87; the sequence is PITIGLYISE…PNHAKYALSN (62 aa). Residues 88-108 form a helical membrane-spanning segment; it reads LLLVHVLAFVCVTILWVFGML. The Cytoplasmic portion of the chain corresponds to 109–120; that stretch reads TCFRCIKTSRRM. Residues 121–141 form a helical membrane-spanning segment; it reads LIIAVLWSMLTFMVTLLGFLI. Topologically, residues 142 to 153 are extracellular; the sequence is DILIFSSHVTWC. A helical membrane pass occupies residues 154–174; the sequence is TWLTLASAFFTVLSGTVLCVM. Residues 175 to 225 are Cytoplasmic-facing; the sequence is RRNLTYDKFLESKPEKHGVYVPLCRLNDVEELEIPWCNTMNHQALTAPTPM.

Belongs to the palI/RIM9 family.

It is found in the cell membrane. Its function is as follows. Required for the proteolytic cleavage of the transcription factor RIM101 in response to alkaline ambient pH. In Kluyveromyces lactis (strain ATCC 8585 / CBS 2359 / DSM 70799 / NBRC 1267 / NRRL Y-1140 / WM37) (Yeast), this protein is pH-response regulator palI/RIM9 homolog 2.